We begin with the raw amino-acid sequence, 527 residues long: Peptide chain release factor 3 (527 aa).

The tr-type G domain maps to 9–278 (NKRRTFAIIS…GLTQWAPKPQ (270 aa)). GTP-binding positions include 18 to 25 (SHPDAGKT), 86 to 90 (DTPGH), and 140 to 143 (NKLD).

This sequence belongs to the TRAFAC class translation factor GTPase superfamily. Classic translation factor GTPase family. PrfC subfamily.

It localises to the cytoplasm. Its function is as follows. Increases the formation of ribosomal termination complexes and stimulates activities of RF-1 and RF-2. It binds guanine nucleotides and has strong preference for UGA stop codons. It may interact directly with the ribosome. The stimulation of RF-1 and RF-2 is significantly reduced by GTP and GDP, but not by GMP. The protein is Peptide chain release factor 3 (prfC) of Haemophilus influenzae (strain ATCC 51907 / DSM 11121 / KW20 / Rd).